The primary structure comprises 550 residues: Methionine--tRNA ligase (550 aa).

The 'HIGH' region motif lies at 13–23 (PYANGPLHFGH). Zn(2+)-binding residues include Cys145, Cys148, Cys158, and Cys161. The 'KMSKS' region motif lies at 331–335 (QFSKS). ATP is bound at residue Lys334.

This sequence belongs to the class-I aminoacyl-tRNA synthetase family. MetG type 1 subfamily. In terms of assembly, monomer. It depends on Zn(2+) as a cofactor.

It is found in the cytoplasm. The enzyme catalyses tRNA(Met) + L-methionine + ATP = L-methionyl-tRNA(Met) + AMP + diphosphate. In terms of biological role, is required not only for elongation of protein synthesis but also for the initiation of all mRNA translation through initiator tRNA(fMet) aminoacylation. This is Methionine--tRNA ligase (metG) from Chlamydia trachomatis serovar D (strain ATCC VR-885 / DSM 19411 / UW-3/Cx).